The sequence spans 236 residues: Small ribosomal subunit protein uS3 (236 aa).

A KH type-2 domain is found at 39–107; that stretch reads IRKFLKKELY…EISINIKEVK (69 aa). Basic and acidic residues predominate over residues 213–229; it reads QPEKKEEAPARDKEGRG. The segment at 213–236 is disordered; it reads QPEKKEEAPARDKEGRGTRRRGRQ.

Belongs to the universal ribosomal protein uS3 family. As to quaternary structure, part of the 30S ribosomal subunit. Forms a tight complex with proteins S10 and S14.

Binds the lower part of the 30S subunit head. Binds mRNA in the 70S ribosome, positioning it for translation. The polypeptide is Small ribosomal subunit protein uS3 (Wolinella succinogenes (strain ATCC 29543 / DSM 1740 / CCUG 13145 / JCM 31913 / LMG 7466 / NCTC 11488 / FDC 602W) (Vibrio succinogenes)).